A 3036-amino-acid chain; its full sequence is DmX-like protein 2 (3036 aa).

WD repeat units follow at residues 108–145 (FLSS…ILEE), 167–207 (KTSV…KSSI), and 230–278 (AHPR…EDCL). The residue at position 326 (serine 326) is a Phosphoserine. The interval 417–480 (KQVDHENDDA…EGSPRTYSRL (64 aa)) is disordered. Over residues 422-434 (ENDDADREDEEHS) the composition is skewed to acidic residues. The span at 435 to 473 (QEDRERGLHMKLDHDLSLDRESEAGTGSSEHEDGEREGS) shows a compositional bias: basic and acidic residues. Phosphoserine is present on serine 473. One copy of the WD 4 repeat lies at 492 to 532 (DRKIETLLTEWNKNPDMLFTIHPVDGTFLVWHVKYLDEYNP). Serine 588 bears the Phosphoserine mark. WD repeat units follow at residues 595–634 (HSRS…KSAF), 751–803 (LHTS…RKLL), and 878–920 (QPSQ…VQAC). The tract at residues 932-959 (SLLSVPGQKNVDSSPETSPSVSPMPHSS) is disordered. A phosphoserine mark is found at serine 944 and serine 945. A compositionally biased stretch (low complexity) spans 949–959 (SPSVSPMPHSS). The stretch at 1000 to 1037 (LSSSSIYPVCLAPYLVVTTCSDNKVRFWKCCMEANPEC) is one WD 8 repeat. Residues serine 1140, serine 1143, and serine 1151 each carry the phosphoserine modification. WD repeat units lie at residues 1163 to 1204 (PNIK…VTEQ) and 1244 to 1281 (GTPS…VKFG). Phosphoserine occurs at positions 1287 and 1400. Position 1417 is a phosphothreonine (threonine 1417). The residue at position 1857 (serine 1857) is a Phosphoserine. The segment covering 1927 to 1936 (ISHRMDDVPS) has biased composition (basic and acidic residues). Residues 1927–1952 (ISHRMDDVPSHSKALSDGNGSSGIEW) form a disordered region. A Phosphoserine modification is found at serine 1984. The segment at 1999 to 2033 (KSTDAREKDKQSDQKASDPNMLLTPQEEDDPEGDT) is disordered. Over residues 2001 to 2014 (TDAREKDKQSDQKA) the composition is skewed to basic and acidic residues. Threonine 2022 carries the post-translational modification Phosphothreonine. A compositionally biased stretch (acidic residues) spans 2024-2033 (QEEDDPEGDT). The stretch at 2122-2153 (GSYERHQIERRRLQAKREHAERRKSWLQKNQD) forms a coiled coil. 2 positions are modified to phosphoserine: serine 2399 and serine 2640. 6 WD repeats span residues 2761–2800 (RNLH…QLVC), 2804–2843 (AGNA…SNPK), 2850–2892 (CHSK…GNSL), 2898–2937 (CHDH…LIHT), 2940–2979 (AHDS…LIHS), and 2992–3030 (NIGA…NIPN).

As to quaternary structure, interacts with MADD and RAB3GAP.

It localises to the cytoplasmic vesicle. The protein resides in the secretory vesicle. It is found in the synaptic vesicle membrane. Its subcellular location is the neuronal dense core vesicle. Functionally, may serve as a scaffold protein for MADD and RAB3GA on synaptic vesicles. Plays a role in the brain as a key controller of neuronal and endocrine homeostatic processes. This chain is DmX-like protein 2 (DMXL2), found in Homo sapiens (Human).